The sequence spans 191 residues: Peptidyl-tRNA hydrolase (191 aa).

Tyr16 contributes to the tRNA binding site. Catalysis depends on His21, which acts as the Proton acceptor. 3 residues coordinate tRNA: Phe66, Asn68, and Asn114.

The protein belongs to the PTH family. Monomer.

Its subcellular location is the cytoplasm. The catalysed reaction is an N-acyl-L-alpha-aminoacyl-tRNA + H2O = an N-acyl-L-amino acid + a tRNA + H(+). Hydrolyzes ribosome-free peptidyl-tRNAs (with 1 or more amino acids incorporated), which drop off the ribosome during protein synthesis, or as a result of ribosome stalling. Functionally, catalyzes the release of premature peptidyl moieties from peptidyl-tRNA molecules trapped in stalled 50S ribosomal subunits, and thus maintains levels of free tRNAs and 50S ribosomes. This is Peptidyl-tRNA hydrolase from Geotalea daltonii (strain DSM 22248 / JCM 15807 / FRC-32) (Geobacter daltonii).